A 798-amino-acid chain; its full sequence is Protocadherin beta-10 (798 aa).

An N-terminal signal peptide occupies residues 1–26; it reads MAVRELCFSRQRQVLFLFLFWGVSLA. Residues 27 to 690 lie on the Extracellular side of the membrane; the sequence is GSGFGRYSVT…AQADLLTVYL (664 aa). Cadherin domains are found at residues 35–133, 138–242, 247–347, 352–451, and 456–561; these read VTEE…APVF, TVLK…APQF, YETQ…PPEL, FSNS…APAF, and YTLF…SPFV. N169 carries N-linked (GlcNAc...) asparagine glycosylation. N-linked (GlcNAc...) asparagine glycans are attached at residues N418 and N436. N-linked (GlcNAc...) asparagine glycosylation occurs at N567. Residues 568–671 form the Cadherin 6 domain; it reads GSAPCTELVP…LVDGFSQPYL (104 aa). Residues 691 to 711 form a helical membrane-spanning segment; that stretch reads VVALASVSSLFLFSVLLFVAV. Topologically, residues 712 to 798 are cytoplasmic; that stretch reads RLCRRSRAAS…FRNSFGFNIQ (87 aa).

It is found in the cell membrane. Functionally, potential calcium-dependent cell-adhesion protein. May be involved in the establishment and maintenance of specific neuronal connections in the brain. This is Protocadherin beta-10 (PCDHB10) from Pan troglodytes (Chimpanzee).